Reading from the N-terminus, the 433-residue chain is Aspartate--tRNA(Asp/Asn) ligase (433 aa).

Position 167 (glutamate 167) interacts with L-aspartate. The aspartate stretch occupies residues 189–192 (QLFK). Arginine 211 contacts L-aspartate. ATP is bound by residues 211–213 (RAE), 219–221 (RHL), and glutamate 356. 2 residues coordinate Mg(2+): glutamate 356 and serine 359. Positions 359 and 363 each coordinate L-aspartate. 404 to 407 (GGER) provides a ligand contact to ATP.

This sequence belongs to the class-II aminoacyl-tRNA synthetase family. Type 2 subfamily. In terms of assembly, homodimer. Mg(2+) is required as a cofactor.

It localises to the cytoplasm. The catalysed reaction is tRNA(Asx) + L-aspartate + ATP = L-aspartyl-tRNA(Asx) + AMP + diphosphate. Its function is as follows. Aspartyl-tRNA synthetase with relaxed tRNA specificity since it is able to aspartylate not only its cognate tRNA(Asp) but also tRNA(Asn). Reaction proceeds in two steps: L-aspartate is first activated by ATP to form Asp-AMP and then transferred to the acceptor end of tRNA(Asp/Asn). The protein is Aspartate--tRNA(Asp/Asn) ligase of Natronomonas pharaonis (strain ATCC 35678 / DSM 2160 / CIP 103997 / JCM 8858 / NBRC 14720 / NCIMB 2260 / Gabara) (Halobacterium pharaonis).